We begin with the raw amino-acid sequence, 790 residues long: Tumor necrosis factor alpha-induced protein 3 (790 aa).

Ala-2 is modified (N-acetylalanine). Positions 58–300 are TRAF-binding; sequence PQFREIIHKA…LTDPENEMKE (243 aa). One can recognise an OTU domain in the interval 92–263; the sequence is LVALKTNGDG…SHHFVPLVTL (172 aa). Asp-100 is an active-site residue. Cys-103 (nucleophile) is an active-site residue. Interaction with ubiquitin stretches follow at residues 157–159, 190–192, and 224–227; these read LCY, SLE, and FAPL. The active-site Proton acceptor is the His-256. Residues 357 to 368 show a composition bias toward basic and acidic residues; the sequence is QENSEQGRREGH. The interval 357-377 is disordered; that stretch reads QENSEQGRREGHAQNPMEPSV. The interval 369-775 is interaction with TNIP1; sequence AQNPMEPSVP…ACDHFGNAKC (407 aa). An A20-type 1 zinc finger spans residues 381 to 416; the sequence is SLMDVKCETPNCPFFMSVNTQPLCHECSERRQKNQN. Residues 386-453 form an interaction with RIPK1 region; it reads KCETPNCPFF…EPLAWNPEES (68 aa). Cys-387, Cys-392, Cys-404, and Cys-407 together coordinate Zn(2+). Disordered regions lie at residues 415–434 and 447–468; these read QNKLPKLNSKPGPEGLPGMA and AWNPEESTGGPHSAPPTAPSPF. Ser-459 bears the Phosphoserine mark. 2 A20-type zinc fingers span residues 472 to 507 and 515 to 548; these read ETTAMKCRSPGCPFTLNVQHNGFCERCHNARQLHAS and HLDPGKCQACLQDVTRTFNGICSTCFKRTTAEAS. Zn(2+)-binding residues include Cys-478, Cys-483, Cys-495, Cys-498, Cys-521, Cys-524, Cys-536, and Cys-539. The disordered stretch occupies residues 550–583; sequence SLSTSLPPSCHQRSKSDPSRLVRSPSPHSCHRAG. Position 575 is a phosphoserine (Ser-575). An A20-type 4 zinc finger spans residues 601–636; it reads RTGTSKCRKAGCVYFGTPENKGFCTLCFIEYRENKH. The tract at residues 605 to 655 is required for proteasomal degradation of UBE2N and UBE2D3, TRAF6 deubiquitination, and TAX1BP1 interaction with UBE2N; that stretch reads SKCRKAGCVYFGTPENKGFCTLCFIEYRENKHFAAASGKVSPTASRFQNTI. A sufficient for inhibitory activity of TNF-induced NF-kappa-B activity region spans residues 606-790; that stretch reads KCRKAGCVYF…ECFQFKQMYG (185 aa). Zn(2+) is bound by residues Cys-607, Cys-612, Cys-624, and Cys-627. Residue Ser-645 is modified to Phosphoserine. An A20-type 5 zinc finger spans residues 651–686; it reads FQNTIPCLGRECGTLGSTMFEGYCQKCFIEAQNQRF. Zn(2+) contacts are provided by Cys-657, Cys-662, Cys-674, and Cys-677. The span at 689 to 705 shows a compositional bias: basic and acidic residues; that stretch reads AKRTEEQLRSSQRRDVP. A disordered region spans residues 689-712; sequence AKRTEEQLRSSQRRDVPRTTQSTS. Residues 697–790 form a required for lysosomal localization and for TRAF2 lysosomal degradation region; it reads RSSQRRDVPR…ECFQFKQMYG (94 aa). A20-type zinc fingers lie at residues 710 to 745 and 756 to 790; these read STSRPKCARASCKNILACRSEELCMECQHPNQRMGP and DPPKQRCRAPACDHFGNAKCNGYCNECFQFKQMYG. Zn(2+) is bound by residues Cys-716, Cys-721, Cys-733, Cys-736, Cys-762, Cys-767, Cys-779, and Cys-782.

Belongs to the peptidase C64 family. Homodimer. Interacts with TNIP1, TAX1BP1 and TRAF2. Interacts with RNF11, ITCH and TAX1BP1 only after TNF stimulation; these interaction are transient and they are lost after 1 hour of stimulation with TNF. Interacts with YWHAZ and YWHAH. Interacts with IKBKG; the interaction is induced by TNF stimulation and by polyubiquitin. Interacts with RIPK1. Interacts with UBE2N; the interaction requires TAX1BP1. Interacts with TRAF6; the interaction is inhibited by HTLV-1 protein Tax. In terms of processing, proteolytically cleaved by MALT1 upon TCR stimulation; disrupts NF-kappa-B inhibitory function and results in increased IL-2 production. It is proposed that only a fraction of TNFAIP3 colocalized with TCR and CBM complex is cleaved, leaving the main TNFAIP3 pool intact.

The protein resides in the cytoplasm. It is found in the nucleus. It localises to the lysosome. It carries out the reaction Thiol-dependent hydrolysis of ester, thioester, amide, peptide and isopeptide bonds formed by the C-terminal Gly of ubiquitin (a 76-residue protein attached to proteins as an intracellular targeting signal).. Ubiquitin-editing enzyme that contains both ubiquitin ligase and deubiquitinase activities. Involved in immune and inflammatory responses signaled by cytokines, such as TNF-alpha and IL-1 beta, or pathogens via Toll-like receptors (TLRs) through terminating NF-kappa-B activity. Essential component of a ubiquitin-editing protein complex, comprising also RNF11, ITCH and TAX1BP1, that ensures the transient nature of inflammatory signaling pathways. In cooperation with TAX1BP1 promotes disassembly of E2-E3 ubiquitin protein ligase complexes in IL-1R and TNFR-1 pathways; affected are at least E3 ligases TRAF6, TRAF2 and BIRC2, and E2 ubiquitin-conjugating enzymes UBE2N and UBE2D3. In cooperation with TAX1BP1 promotes ubiquitination of UBE2N and proteasomal degradation of UBE2N and UBE2D3. Upon TNF stimulation, deubiquitinates 'Lys-63'-polyubiquitin chains on RIPK1 and catalyzes the formation of 'Lys-48'-polyubiquitin chains. This leads to RIPK1 proteasomal degradation and consequently termination of the TNF- or LPS-mediated activation of NF-kappa-B. Deubiquitinates TRAF6 probably acting on 'Lys-63'-linked polyubiquitin. Upon T-cell receptor (TCR)-mediated T-cell activation, deubiquitinates 'Lys-63'-polyubiquitin chains on MALT1 thereby mediating disassociation of the CBM (CARD11:BCL10:MALT1) and IKK complexes and preventing sustained IKK activation. Deubiquitinates NEMO/IKBKG; the function is facilitated by TNIP1 and leads to inhibition of NF-kappa-B activation. Upon stimulation by bacterial peptidoglycans, probably deubiquitinates RIPK2. Can also inhibit I-kappa-B-kinase (IKK) through a non-catalytic mechanism which involves polyubiquitin; polyubiquitin promotes association with IKBKG and prevents IKK MAP3K7-mediated phosphorylation. Targets TRAF2 for lysosomal degradation. In vitro able to deubiquitinate 'Lys-11'-, 'Lys-48'- and 'Lys-63' polyubiquitin chains. Inhibitor of programmed cell death. Has a role in the function of the lymphoid system. Required for LPS-induced production of pro-inflammatory cytokines and IFN beta in LPS-tolerized macrophages. The protein is Tumor necrosis factor alpha-induced protein 3 (TNFAIP3) of Homo sapiens (Human).